A 551-amino-acid polypeptide reads, in one-letter code: Eukaryotic translation initiation factor 3 subunit D-2 (551 aa).

Residues 91-154 (TKPYQRGRYR…RNTQNMGRRF (64 aa)) are disordered. Residues 95-113 (QRGRYRPNMRNNVRSRGRT) are compositionally biased toward basic residues. Positions 121–136 (ASLGGSTAGGATASTT) are enriched in low complexity. Positions 290–304 (QFDLLTVNETSVEPP) are RNA gate. The disordered stretch occupies residues 527–551 (PENAFDSDGDEEEESSDPLSNSNDN). A compositionally biased stretch (acidic residues) spans 531-542 (FDSDGDEEEESS).

Belongs to the eIF-3 subunit D family. As to quaternary structure, component of the eukaryotic translation initiation factor 3 (eIF-3) complex. The eIF-3 complex interacts with pix.

The protein resides in the cytoplasm. MRNA cap-binding component of the eukaryotic translation initiation factor 3 (eIF-3) complex, which is involved in protein synthesis of a specialized repertoire of mRNAs and, together with other initiation factors, stimulates binding of mRNA and methionyl-tRNAi to the 40S ribosome. The eIF-3 complex specifically targets and initiates translation of a subset of mRNAs involved in cell proliferation. In the eIF-3 complex, eif3d specifically recognizes and binds the 7-methylguanosine cap of a subset of mRNAs. The chain is Eukaryotic translation initiation factor 3 subunit D-2 from Drosophila melanogaster (Fruit fly).